The primary structure comprises 291 residues: Undecaprenyl-diphosphatase (291 aa).

The next 8 membrane-spanning stretches (helical) occupy residues 1–21 (MFIIELIKGIILGIVEGLTEF), 48–68 (SAFTFKIVIQLGSVFAAAWVF), 102–122 (LHVLVGMVPAGILGLLFDDFI), 126–146 (LFSVPTVMIGLFVGAIYMIIA), 162–182 (ISYFQAFVIGISQAVAMWPGF), 203–223 (SDFTFIMAVPIMLAASGLSLL), 231–251 (IADIPFYILGFLAAFTVGLIA), and 267–287 (FAIYRIVLVIFIAILYFGFGI).

This sequence belongs to the UppP family.

The protein localises to the cell membrane. The enzyme catalyses di-trans,octa-cis-undecaprenyl diphosphate + H2O = di-trans,octa-cis-undecaprenyl phosphate + phosphate + H(+). In terms of biological role, catalyzes the dephosphorylation of undecaprenyl diphosphate (UPP). Confers resistance to bacitracin. In Staphylococcus aureus (strain MRSA252), this protein is Undecaprenyl-diphosphatase.